The following is a 697-amino-acid chain: Elongation factor G 2 (697 aa).

The tr-type G domain occupies 5 to 280 (SKYRNIGIFA…AVVDYLPDPV (276 aa)). Residues 14–21 (AHVDAGKT), 78–82 (DTPGH), and 132–135 (NKLD) each bind GTP.

The protein belongs to the TRAFAC class translation factor GTPase superfamily. Classic translation factor GTPase family. EF-G/EF-2 subfamily.

The protein localises to the cytoplasm. Functionally, catalyzes the GTP-dependent ribosomal translocation step during translation elongation. During this step, the ribosome changes from the pre-translocational (PRE) to the post-translocational (POST) state as the newly formed A-site-bound peptidyl-tRNA and P-site-bound deacylated tRNA move to the P and E sites, respectively. Catalyzes the coordinated movement of the two tRNA molecules, the mRNA and conformational changes in the ribosome. This Shewanella frigidimarina (strain NCIMB 400) protein is Elongation factor G 2.